Here is a 614-residue protein sequence, read N- to C-terminus: Threonine--tRNA ligase (614 aa).

An editing domain region spans residues 1 to 141 (MRLLLIHSDY…LSKTIVPGEE (141 aa)). A catalytic region spans residues 198–490 (AHVDLMRSKE…ISTQKVPALP (293 aa)). Zn(2+) contacts are provided by C290, H342, and H463.

It belongs to the class-II aminoacyl-tRNA synthetase family. As to quaternary structure, homodimer. Requires Zn(2+) as cofactor.

It localises to the cytoplasm. The enzyme catalyses tRNA(Thr) + L-threonine + ATP = L-threonyl-tRNA(Thr) + AMP + diphosphate + H(+). Functionally, catalyzes the attachment of threonine to tRNA(Thr) in a two-step reaction: L-threonine is first activated by ATP to form Thr-AMP and then transferred to the acceptor end of tRNA(Thr). Also edits incorrectly charged L-seryl-tRNA(Thr). This Methanoregula boonei (strain DSM 21154 / JCM 14090 / 6A8) protein is Threonine--tRNA ligase.